A 170-amino-acid chain; its full sequence is Small ribosomal subunit protein uS4 (170 aa).

Positions 100–164 constitute an S4 RNA-binding domain; it reads RRLQTVVYRE…SDLTDELHPA (65 aa).

It belongs to the universal ribosomal protein uS4 family. As to quaternary structure, part of the 30S ribosomal subunit. Contacts protein S5. The interaction surface between S4 and S5 is involved in control of translational fidelity.

Its function is as follows. One of the primary rRNA binding proteins, it binds directly to 16S rRNA where it nucleates assembly of the body of the 30S subunit. In terms of biological role, with S5 and S12 plays an important role in translational accuracy. The protein is Small ribosomal subunit protein uS4 of Halobacterium salinarum (strain ATCC 29341 / DSM 671 / R1).